The sequence spans 434 residues: Zinc finger protein kipf (434 aa).

The region spanning 7–88 is the ZAD domain; it reads NVCRTCMDET…EQSYQHFFRV (82 aa). 4 residues coordinate Zn(2+): Cys9, Cys12, Cys61, and Cys64. A disordered region spans residues 117-173; that stretch reads QLKSDRQQDTQQMTKTQKPDDDLSQKQTLQAKLQEGNIDGPPESFTLHPRKRTCRTE. A C2H2-type 1; degenerate zinc finger spans residues 197 to 219; that stretch reads YNCPHCSKRFCSQTQLRTHITDL. 3 consecutive C2H2-type zinc fingers follow at residues 221–243, 249–271, and 277–299; these read NRCPYCPRTYMQKSNLKRHLRNH, HKCFHCSKAFMRKDHLKRHLRTH, and LSCSQCSAVFIEHVQLEIHRREH. The disordered stretch occupies residues 295 to 328; sequence HRREHKQRPGSSKSESTKDPDSDDSDQAQDLKPK. Residues Ser316 and Ser319 each carry the phosphoserine modification. 3 C2H2-type zinc fingers span residues 348-370, 377-399, and 404-427; these read PICDICQKKFSSVYALKRHMLTH, KKCTYCSEEFKTEKHLKRHERGH, and FRCEFCSLVFVDVNYLRKHKKRIH.

In terms of assembly, homodimer; mediated by the ZAD domain. Interacts (via C2H2 type zinc finger 4) with rhi/rhino (via Chromo domain). Dimerization is required for association with DNA and interaction with rhi/rhino. As to expression, primarily expressed in ovaries and absent from testes. In ovaries very low levels in germline stem cells and cystoblasts but abundant in developing cysts and polyploid nurse cells.

The protein localises to the nucleus. It localises to the chromosome. Functionally, DNA-binding zinc finger protein that recruits chromo domain protein rhino/rhi to specific chromatin regions enriched in H3K9me2/3 histone methylation, mediating piRNA (piwi-interacting RNA) biogenesis. May bind to GC rich DNA sequences including a 5'-GRGGN-3' sequence motif. Nucleates rhi/rhino accumulation and stabilizes its expansion. Involved in piRNA transposon repression, particularly in the female ovary during oogenesis. The sequence is that of Zinc finger protein kipf from Drosophila melanogaster (Fruit fly).